We begin with the raw amino-acid sequence, 295 residues long: ATP synthase gamma chain (295 aa).

The protein belongs to the ATPase gamma chain family. F-type ATPases have 2 components, CF(1) - the catalytic core - and CF(0) - the membrane proton channel. CF(1) has five subunits: alpha(3), beta(3), gamma(1), delta(1), epsilon(1). CF(0) has three main subunits: a, b and c.

The protein localises to the cell inner membrane. Its function is as follows. Produces ATP from ADP in the presence of a proton gradient across the membrane. The gamma chain is believed to be important in regulating ATPase activity and the flow of protons through the CF(0) complex. In Campylobacter fetus subsp. fetus (strain 82-40), this protein is ATP synthase gamma chain.